A 332-amino-acid polypeptide reads, in one-letter code: Cytoplasmic phosphatidylinositol transfer protein 1 (332 aa).

4 positions are modified to phosphoserine: Ser119, Ser122, Ser270, and Ser274. Residues Pro272–Ser281 show a composition bias toward low complexity. Residues Pro272–Glu332 are disordered. Position 278 is a phosphothreonine (Thr278).

The protein belongs to the PtdIns transfer protein family. PI transfer class IIB subfamily. In terms of tissue distribution, widely expressed in brain, with expression in the gray matters of pre- and postnatal brains. As to expression, weakly expressed in brain and is rather confined to the embryonic stage.

Its subcellular location is the cytoplasm. The protein resides in the nucleus. It catalyses the reaction a 1,2-diacyl-sn-glycero-3-phospho-(1D-myo-inositol)(in) = a 1,2-diacyl-sn-glycero-3-phospho-(1D-myo-inositol)(out). The enzyme catalyses a 1,2-diacyl-sn-glycero-3-phosphate(in) = a 1,2-diacyl-sn-glycero-3-phosphate(out). Its function is as follows. Catalyzes the transfer of phosphatidylinositol (PI) and phosphatidic acid (PA) between membranes. Binds PA derived from the phospholipase D signaling pathway and among the cellular PA species, preferably binds to the C16:0/16:1 and C16:1/18:1 PA species. Functionally, specifically binds to phosphatidylinositol but not to other phospholipids and may play a role in the phosphoinositide-mediated signaling in the neural development. This Mus musculus (Mouse) protein is Cytoplasmic phosphatidylinositol transfer protein 1 (Pitpnc1).